The chain runs to 884 residues: Valine--tRNA ligase (884 aa).

The 'HIGH' region motif lies at 43-53; that stretch reads PNVTGSLHIGH. Residues 530 to 534 carry the 'KMSKS' region motif; the sequence is KMSKS. Lys-533 contributes to the ATP binding site. Residues 817-884 are a coiled coil; that stretch reads VIDLDAERGR…KLKAALERLM (68 aa).

The protein belongs to the class-I aminoacyl-tRNA synthetase family. ValS type 1 subfamily. In terms of assembly, monomer.

Its subcellular location is the cytoplasm. The catalysed reaction is tRNA(Val) + L-valine + ATP = L-valyl-tRNA(Val) + AMP + diphosphate. Functionally, catalyzes the attachment of valine to tRNA(Val). As ValRS can inadvertently accommodate and process structurally similar amino acids such as threonine, to avoid such errors, it has a 'posttransfer' editing activity that hydrolyzes mischarged Thr-tRNA(Val) in a tRNA-dependent manner. The chain is Valine--tRNA ligase from Zymomonas mobilis subsp. mobilis (strain ATCC 31821 / ZM4 / CP4).